The following is a 174-amino-acid chain: Nascent polypeptide-associated complex subunit alpha (174 aa).

An N-acetylserine modification is found at serine 2. The NAC-A/B domain occupies 14–78 (NKNEKKAREL…AKVDNFTQKL (65 aa)). A disordered region spans residues 85-137 (AQASGIMPSNEDVATKSPEDIQADMQAAAEGSVNAAAEEDDEEGEVDAGDLNK). A Phosphoserine modification is found at serine 93. Low complexity predominate over residues 111–120 (AAAEGSVNAA). Acidic residues predominate over residues 121–132 (AEEDDEEGEVDA). Positions 135 to 174 (LNKDDIELVVQQTNVSKNQAIKALKAHNGDLVNAIMSLSK) constitute a UBA domain.

This sequence belongs to the NAC-alpha family. In terms of assembly, part of the nascent polypeptide-associated complex (NAC), consisting of EGD2 and either EGD1 or BTT1. NAC associates with ribosomes via EGD1 or BTT1, and with the CCR4-NOT complex.

The protein localises to the cytoplasm. It localises to the nucleus. Functionally, component of the nascent polypeptide-associated complex (NAC), a dynamic component of the ribosomal exit tunnel, protecting the emerging polypeptides from interaction with other cytoplasmic proteins to ensure appropriate nascent protein targeting. The NAC complex also promotes mitochondrial protein import by enhancing productive ribosome interactions with the outer mitochondrial membrane and blocks the inappropriate interaction of ribosomes translating non-secretory nascent polypeptides with translocation sites in the membrane of the endoplasmic reticulum. EGD2 may also be involved in transcription regulation. The protein is Nascent polypeptide-associated complex subunit alpha (EGD2) of Saccharomyces cerevisiae (strain YJM789) (Baker's yeast).